The chain runs to 335 residues: Ferrochelatase (335 aa).

Positions 192 and 291 each coordinate Fe cation.

Belongs to the ferrochelatase family.

It localises to the cytoplasm. It carries out the reaction heme b + 2 H(+) = protoporphyrin IX + Fe(2+). It participates in porphyrin-containing compound metabolism; protoheme biosynthesis; protoheme from protoporphyrin-IX: step 1/1. Catalyzes the ferrous insertion into protoporphyrin IX. This Bdellovibrio bacteriovorus (strain ATCC 15356 / DSM 50701 / NCIMB 9529 / HD100) protein is Ferrochelatase.